The sequence spans 529 residues: Beta-hexosaminidase subunit alpha (529 aa).

A signal peptide spans 1 to 22 (MAGSTLRFSLLLAAAFAGRATA). The propeptide occupies 23–88 (LWPWPQYIQT…RFPHPIEKRH (66 aa)). A disulfide bond links Cys58 and Cys104. Residues Asn115, Asn157, and Asn295 are each glycosylated (N-linked (GlcNAc...) asparagine). A disulfide bridge links Cys277 with Cys328. The active-site Proton donor is Glu323. The segment at 423-424 (NH) is critical for hydrolysis GM2 gangliosides. Cys505 and Cys522 are joined by a disulfide.

The protein belongs to the glycosyl hydrolase 20 family. As to quaternary structure, there are 3 beta-hexosaminidase isozymes: isozyme A (hexosaminidase A) is a heterodimer composed of one subunit alpha and one subunit beta (chain A and B); isozyme B (hexosaminidase B) is a homodimer of two beta subunits (two chains A and B); isozyme S (hexosaminidase S) is a homodimer of two alpha subunits. The composition of the dimer (isozyme A versus isozyme S) has a significant effect on the substrate specificity of the alpha subunit active site.

The protein resides in the lysosome. The enzyme catalyses Hydrolysis of terminal non-reducing N-acetyl-D-hexosamine residues in N-acetyl-beta-D-hexosaminides.. The catalysed reaction is N-acetyl-beta-D-galactosaminyl-(1-&gt;4)-beta-D-3-sulfogalactosyl-(1-&gt;4)-beta-D-glucosyl-(1&lt;-&gt;1')-ceramide + H2O = a beta-D-3-sulfogalactosyl-(1-&gt;4)-beta-D-glucosyl-(1&lt;-&gt;1')-ceramide + N-acetyl-beta-D-galactosamine. It catalyses the reaction a ganglioside GM2 (d18:1(4E)) + H2O = a ganglioside GM3 (d18:1(4E)) + N-acetyl-beta-D-galactosamine. It carries out the reaction a ganglioside GM2 + H2O = a ganglioside GM3 + N-acetyl-beta-D-galactosamine. The enzyme catalyses beta-D-GalNAc-(1-&gt;4)-alpha-L-IdoA-(1-&gt;3)-beta-D-GalNAc-4-sulfate-(1-&gt;4)-alpha-L-IdoA-(1-&gt;3)-D-GalNAc-4-sulfate + H2O = alpha-L-IdoA-(1-&gt;3)-beta-D-GalNAc-4-sulfate-(1-&gt;4)-alpha-L-IdoA-(1-&gt;3)-D-GalNAc-4-sulfate + N-acetyl-D-galactosamine. The catalysed reaction is N-acetyl-beta-D-6-sulfogalactosaminyl-(1-&gt;4)-alpha-L-iduronyl-(1-&gt;3)-N-acetyl-D-6-sulfogalactosamine + H2O = alpha-L-iduronyl-(1-&gt;3)-N-acetyl-D-6-sulfogalactosamine + N-acetyl-D-6-sulfogalactosamine. Addition of GM2A stimulates the hydrolysis of sulfated glycosphingolipid SM2 and the ganglioside GM2. In terms of biological role, hydrolyzes the non-reducing end N-acetyl-D-hexosamine and/or sulfated N-acetyl-D-hexosamine of glycoconjugates, such as the oligosaccharide moieties from proteins and neutral glycolipids, or from certain mucopolysaccharides. The isozyme S is as active as the isozyme A on the anionic bis-sulfated glycans, the chondroitin-6-sulfate trisaccharide (C6S-3), and the dermatan sulfate pentasaccharide, and the sulfated glycosphingolipid SM2. The isozyme B does not hydrolyze each of these substrates, however hydrolyzes efficiently neutral oligosaccharide. Only the isozyme A is responsible for the degradation of GM2 gangliosides in the presence of GM2A. The chain is Beta-hexosaminidase subunit alpha from Bos taurus (Bovine).